Consider the following 253-residue polypeptide: 5'-nucleotidase SurE (253 aa).

A divalent metal cation-binding residues include Asp-8, Asp-9, Ser-40, and Asn-93.

This sequence belongs to the SurE nucleotidase family. It depends on a divalent metal cation as a cofactor.

Its subcellular location is the cytoplasm. It carries out the reaction a ribonucleoside 5'-phosphate + H2O = a ribonucleoside + phosphate. Functionally, nucleotidase that shows phosphatase activity on nucleoside 5'-monophosphates. The protein is 5'-nucleotidase SurE of Haemophilus ducreyi (strain 35000HP / ATCC 700724).